Consider the following 193-residue polypeptide: dCTP deaminase, dUMP-forming (193 aa).

DCTP-binding positions include 101–106 (KSSLGR), aspartate 119, 127–129 (TLE), glutamine 148, tyrosine 162, and glutamine 174. The Proton donor/acceptor role is filled by glutamate 129. The segment at 162 to 184 (YGSKGTGSHYQGQRGPTPSRSYE) is disordered. Residues 167-183 (TGSHYQGQRGPTPSRSY) show a composition bias toward polar residues.

It belongs to the dCTP deaminase family. Homotrimer.

The enzyme catalyses dCTP + 2 H2O = dUMP + NH4(+) + diphosphate. It participates in pyrimidine metabolism; dUMP biosynthesis; dUMP from dCTP: step 1/1. In terms of biological role, bifunctional enzyme that catalyzes both the deamination of dCTP to dUTP and the hydrolysis of dUTP to dUMP without releasing the toxic dUTP intermediate. The sequence is that of dCTP deaminase, dUMP-forming from Bifidobacterium longum (strain DJO10A).